We begin with the raw amino-acid sequence, 662 residues long: UvrABC system protein B (662 aa).

Positions 31–188 (DNIEGGEKAQ…NDLVDIQFER (158 aa)) constitute a Helicase ATP-binding domain. 44–51 (GATGTGKT) provides a ligand contact to ATP. The Beta-hairpin motif lies at 97–120 (YYDYYQPEAYVPSSDTYIEKDSSV). The Helicase C-terminal domain occupies 435–601 (QIDDLLGEIN…TIKKEIRDLI (167 aa)). The region spanning 626–661 (KELVKKLEKQMQEAVEVLDFELAAQIRDMMLEVKAL) is the UVR domain.

Belongs to the UvrB family. In terms of assembly, forms a heterotetramer with UvrA during the search for lesions. Interacts with UvrC in an incision complex.

Its subcellular location is the cytoplasm. Its function is as follows. The UvrABC repair system catalyzes the recognition and processing of DNA lesions. A damage recognition complex composed of 2 UvrA and 2 UvrB subunits scans DNA for abnormalities. Upon binding of the UvrA(2)B(2) complex to a putative damaged site, the DNA wraps around one UvrB monomer. DNA wrap is dependent on ATP binding by UvrB and probably causes local melting of the DNA helix, facilitating insertion of UvrB beta-hairpin between the DNA strands. Then UvrB probes one DNA strand for the presence of a lesion. If a lesion is found the UvrA subunits dissociate and the UvrB-DNA preincision complex is formed. This complex is subsequently bound by UvrC and the second UvrB is released. If no lesion is found, the DNA wraps around the other UvrB subunit that will check the other stand for damage. The chain is UvrABC system protein B from Streptococcus pneumoniae serotype 19F (strain G54).